The primary structure comprises 208 residues: N-(5'-phosphoribosyl)anthranilate isomerase (208 aa).

Belongs to the TrpF family.

The enzyme catalyses N-(5-phospho-beta-D-ribosyl)anthranilate = 1-(2-carboxyphenylamino)-1-deoxy-D-ribulose 5-phosphate. The protein operates within amino-acid biosynthesis; L-tryptophan biosynthesis; L-tryptophan from chorismate: step 3/5. The polypeptide is N-(5'-phosphoribosyl)anthranilate isomerase (Dechloromonas aromatica (strain RCB)).